The sequence spans 479 residues: MANHPIDQELTSPAEEELTPREIVAKLDEHIISQKNAKKAVAIALRNRTRRKKLDPEMREEIYPKNIIMIGPTGVGKTEIARRLSKLCGAPFLKVEATKYTEVGYVGRDVESMIRDLAVISMNLVKQEFRTKVEETAKQKAEEALLDILLPFPGENKHGSGQITGFATSSTLADEEDRKTHFLETREFMRKKLKTGKLDDQEVELDLPNPSVSQVPMLQVFGAGNLDDLDNQLQNVLGDILPKKNKKRKLKIPEALKALEESEAEKLLDPDKVQREALRRVEEMGIIFLDEIDKIAGREGKSGADVSREGVQRDLLPIVEGATVNTKIGPVKTDHILFIAAGAFHMTKPSDLIPELQGRFPIRVELEKLSREDFEKILTAPCSSLTRQYEALLSTDGIQLEFSLDGIQEIARIAYDMNEKHENIGARRLNTILERLLEEVSFEGPDLPESQRKVRIDGKYVTDRLQGVIQNKDLSQYIL.

ATP is bound by residues Ile32, 74-79 (GVGKTE), Asp290, Glu355, and Arg427.

It belongs to the ClpX chaperone family. HslU subfamily. As to quaternary structure, a double ring-shaped homohexamer of HslV is capped on each side by a ring-shaped HslU homohexamer. The assembly of the HslU/HslV complex is dependent on binding of ATP.

The protein resides in the cytoplasm. In terms of biological role, ATPase subunit of a proteasome-like degradation complex; this subunit has chaperone activity. The binding of ATP and its subsequent hydrolysis by HslU are essential for unfolding of protein substrates subsequently hydrolyzed by HslV. HslU recognizes the N-terminal part of its protein substrates and unfolds these before they are guided to HslV for hydrolysis. In Leptospira interrogans serogroup Icterohaemorrhagiae serovar Lai (strain 56601), this protein is ATP-dependent protease ATPase subunit HslU.